A 353-amino-acid polypeptide reads, in one-letter code: MKILVINPGSTSTKIAVYENETPLLVRNIKHTVEELSVYPQVIDQFEFRKNLVLQELEANGIPFAFDAVIGRGGLVKPIPGGVYAVNEAMKQDTLHAMRTHACNLGGLIAAELAASLPDCPAFIADPGVVDELEDVARISGSPLMPKITIWHALNQKAIARRFAKEQGTKYEELDLIICHLGGGISIAVHQHGKAIDANNALDGEGPFSPERAGTLPAGQLIDICYSGQFTKDELKKRISGRAGLTAHLGTTDVPAIIKAIEEGDKKAELILDAMIYNVAKAIGGAATVLCGKVDAILLTGGIAYSDYIISRLKKRISFLAPIHVYPGEGEMESLAFNALGALRGELPVQIYK.

Belongs to the acetokinase family.

The protein resides in the cytoplasm. The catalysed reaction is butanoate + ATP = butanoyl phosphate + ADP. The polypeptide is Probable butyrate kinase (Bacteroides thetaiotaomicron (strain ATCC 29148 / DSM 2079 / JCM 5827 / CCUG 10774 / NCTC 10582 / VPI-5482 / E50)).